A 499-amino-acid chain; its full sequence is Transcriptional regulator sdnM (499 aa).

It localises to the nucleus. It functions in the pathway antibiotic biosynthesis. Functionally, transcriptional regulator; part of the gene cluster that mediates the biosynthesis of sordarin and hypoxysordarin, glycoside antibiotics with a unique tetracyclic diterpene aglycone structure. First, the geranylgeranyl diphosphate synthase sdnC constructs GGDP from farnesyl diphosphate and isopentenyl diphosphate. The diterpene cyclase sdnA then catalyzes the cyclization of GGDP to afford cycloaraneosene. Cycloaraneosene is then hydroxylated four times by the putative cytochrome P450 monooxygenases sdnB, sdnE, sdnF and sdnH to give a hydroxylated cycloaraneosene derivative such as cycloaraneosene-8,9,13,19-tetraol. Although the order of the hydroxylations is unclear, at least C8, C9 and C13 of the cycloaraneosene skeleton are hydroxylated before the sordaricin formation. Dehydration of the 13-hydroxy group of the hydroxylated cycloaraneosene derivative might be catalyzed by an unassigned hypothetical protein such as sdnG and sdnP to construct the cyclopentadiene moiety. The FAD-dependent oxidoreductase sdnN is proposed to catalyze the oxidation at C9 of the hydroxylated cycloaraneosene derivative and also catalyze the Baeyer-Villiger oxidation to give the lactone intermediate. The presumed lactone intermediate would be hydrolyzed to give an acrolein moiety and a carboxylate moiety. Then, [4+2]cycloaddition would occur between the acrolein moiety and the cyclopentadiene moiety to give sordaricin. SdnN might also be involved in the [4+2]cycloaddition after the hypothesized oxidation to accommodate the oxidized product and prompt the [4+2]cycloaddition. GDP-6-deoxy-D-altrose may be biosynthesized from GDP-D-mannose by the putative GDP-mannose-4,6-dehydratase sdnI and the short-chain dehydrogenase sdnK. The glycosyltransferase sdnJ catalyzes the attachment of 6-deoxy-D-altrose onto the 19-hydroxy group of sordaricin to give 4'-O-demethylsordarin. The methyltransferase sdnD would complete the biosynthesis of sordarin. Sordarin can be further modified into hypoxysordarin. The unique acyl chain at the 3'-hydroxy group of hypoxysordarin would be constructed by an iterative type I PKS sdnO and the trans-acting polyketide methyltransferase sdnL. SdnL would be responsible for the introduction of an alpha-methyl group of the polyketide chain. Alternatively, the beta-lactamase-like protein sdnR might be responsible for the cleavage and transfer of the polyketide chain from the PKS sdnO to sordarin. Two putative cytochrome P450 monooxygenases, sdnQ and sdnT, might catalyze the epoxidations of the polyketide chain to complete the biosynthesis of hypoxysordarin. Transcriptional regulators sdnM and sdnS are presumably encoded for the transcriptional regulation of the expression of the sdn gene cluster. This Sordaria araneosa (Pleurage araneosa) protein is Transcriptional regulator sdnM.